The sequence spans 74 residues: Antimicrobial peptide ToAp1 (74 aa).

Positions 1–22 are cleaved as a signal peptide; the sequence is MQMKYLIPIFFLVLIVADHCHA. Residue Lys-39 is modified to Lysine amide. Positions 40 to 74 are excised as a propeptide; sequence GRRKRDITAQIEQYRNIQKREAAELEELLANLPVY.

It belongs to the non-disulfide-bridged peptide (NDBP) superfamily. Short antimicrobial peptide (group 4) family. As to expression, expressed by the venom gland.

The protein localises to the secreted. Its function is as follows. Antimicrobial peptide. Is able to kill Mycobacterium abscessus subsp. massiliense in a dose-dependent manner. Has antifungal activity against Candida spp. and one Cryptococcus neoformans strains with MICs values ranging from 12.5 to 200 uM. Also shows an inhibitory activity on C.albicans biofilms at high concentrations. Shows low cytotoxic activity and has weak hemolytic activity on human erythrocytes. Shows anti-inflammatory activities, since it decreases release of pro-inflammatory cytokines, and increases release of anti-inflammatory cytokines. Acts by blocking the Toll-like receptor 4 (TLR4). In addition, decreases the expression of costimulatory molecules such as CD80 and CD86 in LPS-stimulated cells. In vivo, does not induce immune cell migration. Helical wheel projections predict an amphipathic peptide with distinct hydrophobic and hydrophilic faces. The protein is Antimicrobial peptide ToAp1 of Tityus obscurus (Amazonian scorpion).